The sequence spans 206 residues: Protein GrpE (206 aa).

Basic and acidic residues predominate over residues 1–14; that stretch reads MDKKNEQQEVREEN. Residues 1–56 are disordered; the sequence is MDKKNEQQEVREENDTSINQESETQVELEEEVVNEECETSSEKTDEKEVDDENVTD. Residues 24 to 39 show a composition bias toward acidic residues; sequence TQVELEEEVVNEECET.

Belongs to the GrpE family. Homodimer.

The protein resides in the cytoplasm. Its function is as follows. Participates actively in the response to hyperosmotic and heat shock by preventing the aggregation of stress-denatured proteins, in association with DnaK and GrpE. It is the nucleotide exchange factor for DnaK and may function as a thermosensor. Unfolded proteins bind initially to DnaJ; upon interaction with the DnaJ-bound protein, DnaK hydrolyzes its bound ATP, resulting in the formation of a stable complex. GrpE releases ADP from DnaK; ATP binding to DnaK triggers the release of the substrate protein, thus completing the reaction cycle. Several rounds of ATP-dependent interactions between DnaJ, DnaK and GrpE are required for fully efficient folding. This Clostridioides difficile (strain 630) (Peptoclostridium difficile) protein is Protein GrpE.